The sequence spans 483 residues: MHQMTLAEIAKGLEAKQFSAEELSRALLARIAQLDPQLNSFITVTEDLAIEQAKAADARRAAGENGALLGAPIAHKDLFCTNGVLTSCGSKILTGFKAPYDATVVEKLKAAGTVTLGKLNMDEFAMGSANESSHYGAVKNPWDTSRVPGGSSGGSAAAVAARLLPAATGTDTGGSIRQPAALTNLTGIKPTYGRVSRWGMIAYASSLDQGGPLARDAFDCALLLGAMAGFDAKDSTSVDQPVDDYLAALAQPLAGLRIGLPKEYFGAGLDARIGEKVMAVVEELKKLGATVKDISLPNMQHAIPAYYVIAPAEASSNLSRFDGVRFGYRCENPVNLEDLYKRSRGEGFGAEVKRRIMVGTYALSAGYYDAYYIKAQQIRRLIKNDFVAAFKDVDVILGPTTPNLAWKLGEKNADPVSAYLEDIYTITANLAGIPGLSMPAGFVDGLPVGVQLLGNYFQEGRLLNVAHQYQQVSDWHKQAPTGF.

Active-site charge relay system residues include Lys-76 and Ser-151. Residue Ser-175 is the Acyl-ester intermediate of the active site.

Belongs to the amidase family. GatA subfamily. As to quaternary structure, heterotrimer of A, B and C subunits.

The enzyme catalyses L-glutamyl-tRNA(Gln) + L-glutamine + ATP + H2O = L-glutaminyl-tRNA(Gln) + L-glutamate + ADP + phosphate + H(+). Its function is as follows. Allows the formation of correctly charged Gln-tRNA(Gln) through the transamidation of misacylated Glu-tRNA(Gln) in organisms which lack glutaminyl-tRNA synthetase. The reaction takes place in the presence of glutamine and ATP through an activated gamma-phospho-Glu-tRNA(Gln). This is Glutamyl-tRNA(Gln) amidotransferase subunit A from Ectopseudomonas mendocina (strain ymp) (Pseudomonas mendocina).